The sequence spans 72 residues: Osmotically-inducible lipoprotein B (72 aa).

A signal peptide spans 1 to 23 (MFMTSKKMAAAVLAITVAMSLSA). The N-palmitoyl cysteine moiety is linked to residue cysteine 24. A lipid anchor (S-diacylglycerol cysteine) is attached at cysteine 24.

It is found in the cell membrane. In terms of biological role, provides resistance to osmotic stress. May be important for stationary-phase survival. This chain is Osmotically-inducible lipoprotein B (osmB), found in Salmonella typhimurium (strain LT2 / SGSC1412 / ATCC 700720).